The following is a 429-amino-acid chain: Histidine--tRNA ligase (429 aa).

The protein belongs to the class-II aminoacyl-tRNA synthetase family. As to quaternary structure, homodimer.

The protein localises to the cytoplasm. It catalyses the reaction tRNA(His) + L-histidine + ATP = L-histidyl-tRNA(His) + AMP + diphosphate + H(+). The protein is Histidine--tRNA ligase of Pseudomonas putida (strain W619).